A 322-amino-acid polypeptide reads, in one-letter code: Porphobilinogen deaminase (322 aa).

Residue C254 is modified to S-(dipyrrolylmethanemethyl)cysteine.

This sequence belongs to the HMBS family. As to quaternary structure, monomer. Dipyrromethane serves as cofactor.

The catalysed reaction is 4 porphobilinogen + H2O = hydroxymethylbilane + 4 NH4(+). The protein operates within porphyrin-containing compound metabolism; protoporphyrin-IX biosynthesis; coproporphyrinogen-III from 5-aminolevulinate: step 2/4. Its function is as follows. Tetrapolymerization of the monopyrrole PBG into the hydroxymethylbilane pre-uroporphyrinogen in several discrete steps. This chain is Porphobilinogen deaminase, found in Methylococcus capsulatus (strain ATCC 33009 / NCIMB 11132 / Bath).